A 145-amino-acid polypeptide reads, in one-letter code: Basic phospholipase A2 S6-45 (145 aa).

An N-terminal signal peptide occupies residues 1-19 (MYPAHLLVLLAVCVSLLGA). Residues 20–27 (SDIPPQPL) constitute a propeptide that is removed on maturation. Cystine bridges form between C38–C99, C54–C144, C56–C72, C71–C127, C78–C120, C88–C113, and C106–C118. 3 residues coordinate Ca(2+): Y55, G57, and G59. Residue H75 is part of the active site. D76 serves as a coordination point for Ca(2+). The active site involves D121.

Belongs to the phospholipase A2 family. Group I subfamily. D49 sub-subfamily. Ca(2+) serves as cofactor. Expressed by the venom gland.

The protein resides in the secreted. The enzyme catalyses a 1,2-diacyl-sn-glycero-3-phosphocholine + H2O = a 1-acyl-sn-glycero-3-phosphocholine + a fatty acid + H(+). Snake venom phospholipase A2 (PLA2) that inhibits collagen-induced platelet aggregation. PLA2 catalyzes the calcium-dependent hydrolysis of the 2-acyl groups in 3-sn-phosphoglycerides. This is Basic phospholipase A2 S6-45 from Austrelaps superbus (Lowland copperhead snake).